Reading from the N-terminus, the 270-residue chain is NAD kinase (270 aa).

The Proton acceptor role is filled by Asp57. Residues 57–58 (DG), 125–126 (NE), Arg150, and Asn227 contribute to the NAD(+) site.

It belongs to the NAD kinase family. Requires a divalent metal cation as cofactor.

It localises to the cytoplasm. The enzyme catalyses NAD(+) + ATP = ADP + NADP(+) + H(+). Functionally, involved in the regulation of the intracellular balance of NAD and NADP, and is a key enzyme in the biosynthesis of NADP. Catalyzes specifically the phosphorylation on 2'-hydroxyl of the adenosine moiety of NAD to yield NADP. This Ureaplasma parvum serovar 3 (strain ATCC 700970) protein is NAD kinase.